We begin with the raw amino-acid sequence, 332 residues long: Capsular polysaccharide phosphotransferase WcwK (332 aa).

The protein belongs to the stealth family.

This chain is Capsular polysaccharide phosphotransferase WcwK (wcwK), found in Streptococcus pneumoniae.